A 670-amino-acid chain; its full sequence is DNA ligase (670 aa).

NAD(+) contacts are provided by residues D33–D37, S82–L83, and E113. Residue K115 is the N6-AMP-lysine intermediate of the active site. The NAD(+) site is built by R136, E170, K285, and K309. Zn(2+)-binding residues include C403, C406, C421, and C427. Residues E587–G670 enclose the BRCT domain.

It belongs to the NAD-dependent DNA ligase family. LigA subfamily. Mg(2+) serves as cofactor. It depends on Mn(2+) as a cofactor.

It carries out the reaction NAD(+) + (deoxyribonucleotide)n-3'-hydroxyl + 5'-phospho-(deoxyribonucleotide)m = (deoxyribonucleotide)n+m + AMP + beta-nicotinamide D-nucleotide.. In terms of biological role, DNA ligase that catalyzes the formation of phosphodiester linkages between 5'-phosphoryl and 3'-hydroxyl groups in double-stranded DNA using NAD as a coenzyme and as the energy source for the reaction. It is essential for DNA replication and repair of damaged DNA. This is DNA ligase from Halothermothrix orenii (strain H 168 / OCM 544 / DSM 9562).